The sequence spans 394 residues: Small RNA 2'-O-methyltransferase (394 aa).

Positions 78 and 114 each coordinate S-adenosyl-L-methionine. The Mg(2+) site is built by E132, E135, H136, and H181.

Belongs to the methyltransferase superfamily. HEN1 family. It depends on Mg(2+) as a cofactor.

It is found in the cytoplasm. It carries out the reaction small RNA 3'-end nucleotide + S-adenosyl-L-methionine = small RNA 3'-end 2'-O-methylnucleotide + S-adenosyl-L-homocysteine + H(+). Methyltransferase that adds a 2'-O-methyl group at the 3'-end of piRNAs, a class of 24 to 30 nucleotide RNAs that are generated by a Dicer-independent mechanism and are primarily derived from transposons and other repeated sequence elements. This probably protects the 3'-end of piRNAs from uridylation activity and subsequent degradation. Stabilization of piRNAs is essential for gametogenesis. The chain is Small RNA 2'-O-methyltransferase (Henmt1) from Rattus norvegicus (Rat).